We begin with the raw amino-acid sequence, 298 residues long: Tyrosine recombinase XerC (298 aa).

The region spanning 2 to 88 (TDLHTDVERY…ALRSFFDWLV (87 aa)) is the Core-binding (CB) domain. In terms of domain architecture, Tyr recombinase spans 109-288 (HLPKNIDVDD…DFQHLASVYD (180 aa)). Catalysis depends on residues Arg-148, Lys-172, His-240, Arg-243, and His-266. The active-site O-(3'-phospho-DNA)-tyrosine intermediate is the Tyr-275.

Belongs to the 'phage' integrase family. XerC subfamily. As to quaternary structure, forms a cyclic heterotetrameric complex composed of two molecules of XerC and two molecules of XerD, in which XerC interacts with XerD via its C-terminal region, XerD interacts with XerC via its C-terminal region and so on.

The protein resides in the cytoplasm. Its activity is regulated as follows. FtsK may regulate the catalytic switch between XerC and XerD in the heterotetrameric complex during the two steps of the recombination process. Its function is as follows. Site-specific tyrosine recombinase, which acts by catalyzing the cutting and rejoining of the recombining DNA molecules. Binds cooperatively to specific DNA consensus sequences that are separated from XerD binding sites by a short central region, forming the heterotetrameric XerC-XerD complex that recombines DNA substrates. The complex is essential to convert dimers of the bacterial chromosome into monomers to permit their segregation at cell division. It also contributes to the segregational stability of plasmids. In the complex XerC specifically exchanges the top DNA strands. The protein is Tyrosine recombinase XerC of Escherichia coli O45:K1 (strain S88 / ExPEC).